Reading from the N-terminus, the 196-residue chain is Probable molybdenum cofactor guanylyltransferase (196 aa).

Residues 7-9, Lys19, Asp68, and Asp93 contribute to the GTP site; that span reads LAG. Position 93 (Asp93) interacts with Mg(2+).

The protein belongs to the MobA family. Requires Mg(2+) as cofactor.

The protein localises to the cytoplasm. The enzyme catalyses Mo-molybdopterin + GTP + H(+) = Mo-molybdopterin guanine dinucleotide + diphosphate. Its function is as follows. Transfers a GMP moiety from GTP to Mo-molybdopterin (Mo-MPT) cofactor (Moco or molybdenum cofactor) to form Mo-molybdopterin guanine dinucleotide (Mo-MGD) cofactor. The polypeptide is Probable molybdenum cofactor guanylyltransferase (Pyrococcus furiosus (strain ATCC 43587 / DSM 3638 / JCM 8422 / Vc1)).